A 435-amino-acid polypeptide reads, in one-letter code: Tol-Pal system protein TolB (435 aa).

Positions 1–24 (MIPMPKMIRSLLLLFCLLPLGAQA) are cleaved as a signal peptide.

Belongs to the TolB family. In terms of assembly, the Tol-Pal system is composed of five core proteins: the inner membrane proteins TolA, TolQ and TolR, the periplasmic protein TolB and the outer membrane protein Pal. They form a network linking the inner and outer membranes and the peptidoglycan layer.

Its subcellular location is the periplasm. Its function is as follows. Part of the Tol-Pal system, which plays a role in outer membrane invagination during cell division and is important for maintaining outer membrane integrity. The protein is Tol-Pal system protein TolB of Thioalkalivibrio sulfidiphilus (strain HL-EbGR7).